The following is a 430-amino-acid chain: Probable ribosomal RNA small subunit methyltransferase B (430 aa).

S-adenosyl-L-methionine contacts are provided by residues 246–252, aspartate 270, aspartate 299, and aspartate 318; that span reads CAAPGSK. Residue cysteine 371 is the Nucleophile of the active site.

This sequence belongs to the class I-like SAM-binding methyltransferase superfamily. RsmB/NOP family.

The protein resides in the cytoplasm. The enzyme catalyses cytidine(967) in 16S rRNA + S-adenosyl-L-methionine = 5-methylcytidine(967) in 16S rRNA + S-adenosyl-L-homocysteine + H(+). In terms of biological role, specifically methylates the cytosine at position 967 (m5C967) of 16S rRNA. The protein is Probable ribosomal RNA small subunit methyltransferase B of Coxiella burnetii (strain RSA 493 / Nine Mile phase I).